A 122-amino-acid polypeptide reads, in one-letter code: HLLQFGDLIDKIAGRSGFWYYGFYGCYCGLGGRGRPQDATDRCCFVHDCCYGKVTGCDPKKDIYTYSEENGAIVCGGDNPCKKEICECDRDAAICFRDNLDTYDNKYWLFPNKYCKEESEPC.

Cystine bridges form between Cys26/Cys115, Cys28/Cys44, Cys43/Cys95, Cys49/Cys122, Cys50/Cys88, Cys57/Cys81, and Cys75/Cys86. Tyr27, Gly29, and Gly31 together coordinate Ca(2+). His47 is an active-site residue. Asp48 provides a ligand contact to Ca(2+). Asp89 is an active-site residue.

The cofactor is Ca(2+). As to expression, expressed by the venom gland.

It localises to the secreted. The enzyme catalyses a 1,2-diacyl-sn-glycero-3-phosphocholine + H2O = a 1-acyl-sn-glycero-3-phosphocholine + a fatty acid + H(+). Its function is as follows. PLA2 catalyzes the calcium-dependent hydrolysis of the 2-acyl groups in 3-sn-phosphoglycerides. The protein is Acidic phospholipase A2 of Lachesis stenophrys (Central American bushmaster).